Reading from the N-terminus, the 390-residue chain is Probable purine permease 10 (390 aa).

10 helical membrane passes run 44–64 (WLRVTLYTFFVISGQTVATIL), 78–98 (LATVVQLVGFPVLLPYYILSF), 117–137 (VLVYVVLGLLVGADCYLYSIG), 140–160 (YLPVSTYSLICASQLAFNAFF), 169–189 (LTPIILNSLFLLTISSTLLAF), 204–224 (YVKGFICTVAASAGYGLVLSL), 241–261 (VMDMIIYVSLVASCVSVVGLF), 287–307 (LVWTAVTWQVFSIGGTGLIFE), 312–332 (FSNAISVLGLPVVPILAVIIF), and 336–356 (MNGLKVISMILAIWGFTSYVY). The disordered stretch occupies residues 370 to 390 (EITTTESPDPPEAEESTWQSK).

It belongs to the purine permeases (TC 2.A.7.14) family.

The protein resides in the membrane. This chain is Probable purine permease 10 (PUP10), found in Arabidopsis thaliana (Mouse-ear cress).